A 76-amino-acid chain; its full sequence is DNA-directed RNA polymerase subunit epsilon (76 aa).

Belongs to the RNA polymerase subunit epsilon family. In terms of assembly, RNAP is composed of a core of 2 alpha, a beta and a beta' subunit. The core is associated with a delta subunit, and at least one of epsilon or omega. When a sigma factor is associated with the core the holoenzyme is formed, which can initiate transcription.

The enzyme catalyses RNA(n) + a ribonucleoside 5'-triphosphate = RNA(n+1) + diphosphate. Functionally, a non-essential component of RNA polymerase (RNAP). In Lactococcus lactis subsp. lactis (strain IL1403) (Streptococcus lactis), this protein is DNA-directed RNA polymerase subunit epsilon.